A 137-amino-acid chain; its full sequence is Basic phospholipase A2 beta-bungarotoxin A5 chain (137 aa).

A signal peptide spans 1–9 (AVCVSLLGA). Residues 10–17 (ANIPPQHL) constitute a propeptide that is removed on maturation. 6 cysteine pairs are disulfide-bonded: Cys44-Cys136, Cys46-Cys62, Cys61-Cys117, Cys68-Cys110, Cys78-Cys103, and Cys96-Cys108. Ca(2+) is bound by residues Tyr45, Gly47, and Gly49. His65 is an active-site residue. Residue Asp66 participates in Ca(2+) binding. Asp111 is an active-site residue.

It belongs to the phospholipase A2 family. Group I subfamily. D49 sub-subfamily. In terms of assembly, heterodimer; disulfide-linked. The A chains have phospholipase A2 activity and the B chains show homology with the basic protease inhibitors. Ca(2+) serves as cofactor. As to expression, expressed by the venom gland.

Its subcellular location is the secreted. The catalysed reaction is a 1,2-diacyl-sn-glycero-3-phosphocholine + H2O = a 1-acyl-sn-glycero-3-phosphocholine + a fatty acid + H(+). In terms of biological role, snake venom phospholipase A2 (PLA2) that inhibits neuromuscular transmission by blocking acetylcholine release from the nerve termini. PLA2 catalyzes the calcium-dependent hydrolysis of the 2-acyl groups in 3-sn-phosphoglycerides. This chain is Basic phospholipase A2 beta-bungarotoxin A5 chain, found in Bungarus multicinctus (Many-banded krait).